Consider the following 513-residue polypeptide: Histidine ammonia-lyase (513 aa).

The segment at residues alanine 142–glycine 144 is a cross-link (5-imidazolinone (Ala-Gly)). Serine 143 is subject to 2,3-didehydroalanine (Ser).

It belongs to the PAL/histidase family. In terms of processing, contains an active site 4-methylidene-imidazol-5-one (MIO), which is formed autocatalytically by cyclization and dehydration of residues Ala-Ser-Gly.

Its subcellular location is the cytoplasm. The enzyme catalyses L-histidine = trans-urocanate + NH4(+). Its pathway is amino-acid degradation; L-histidine degradation into L-glutamate; N-formimidoyl-L-glutamate from L-histidine: step 1/3. The sequence is that of Histidine ammonia-lyase from Hyphomonas neptunium (strain ATCC 15444).